A 405-amino-acid chain; its full sequence is MTKKITVLVCGGGNGAHVTAGLAASRDDIETRVLTTFADEAERWTNIMKENDLRITVDEGDIKSGESVDFKVKLNCITKDPSKAVPGADVIIFTVPAFAHQSYLEAIEPYIQPNTTIVGMPGQPGFEFQVFDVLKDKAKQCVIMSFESLPWACRIAEFGKFVQILMVKVNLMGCLIRGQSKPSYDPMEAVQRVMGKAPILTQANNYIEPILATKSIIHPPIMYGKWKDWDGKPIEEKPLFYQGLDEEQARYLGGISDELVATAKAIAAQKPEVDLSGVLHLYDWYLRDHKPYIKDTTSLLTVLQTDTAYDGLVHPMKETEDGKFVPDFRYRYLTEDVPNGLVVTKGLAQIAGVPTPYHDEVIAWCQKQLGKEIIVGDELKGKDIGSTRCPQRYGINTMDALVNIM.

The protein belongs to the lysopine/nopaline/octopine/opine/vitopine dehydrogenases family.

This Haliotis discus hannai (Japanese abalone) protein is Opine dehydrogenase.